Reading from the N-terminus, the 555-residue chain is GPI-anchor transamidase component PIGS (555 aa).

Over 2 to 18 the chain is Cytoplasmic; it reads AAAGAAATHLEVARGKR. Positions 15 and 18 each coordinate a cardiolipin. A helical membrane pass occupies residues 19–39; the sequence is AALFFAAVAIVLGLPLWWKTT. Residues 40–517 lie on the Lumenal side of the membrane; the sequence is ETYRASLPYS…LHLLYFPDDQ (478 aa). Asparagine 267 and asparagine 370 each carry an N-linked (GlcNAc...) asparagine glycan. A helical membrane pass occupies residues 518–532; it reads KFAIYIPLFLPMAVP. Residues 533–555 lie on the Cytoplasmic side of the membrane; that stretch reads ILLSLVKIFLETRKSWRKPEKTD.

This sequence belongs to the PIGS family. Heteropentamer. Part of the GPI-anchor transamidase complex, consisting of PIGK, PIGT, PIGS, PIGU and GAA1.

It is found in the endoplasmic reticulum membrane. Its pathway is glycolipid biosynthesis; glycosylphosphatidylinositol-anchor biosynthesis. Its function is as follows. Component of the glycosylphosphatidylinositol-anchor (GPI-anchor) transamidase (GPI-T) complex that catalyzes the formation of the linkage between a proprotein and a GPI-anchor and participates in GPI anchored protein biosynthesis. This Homo sapiens (Human) protein is GPI-anchor transamidase component PIGS.